Here is a 109-residue protein sequence, read N- to C-terminus: Nucleoid-associated protein Bcer98_0019 (109 aa).

Belongs to the YbaB/EbfC family. In terms of assembly, homodimer.

Its subcellular location is the cytoplasm. The protein resides in the nucleoid. Functionally, binds to DNA and alters its conformation. May be involved in regulation of gene expression, nucleoid organization and DNA protection. The polypeptide is Nucleoid-associated protein Bcer98_0019 (Bacillus cytotoxicus (strain DSM 22905 / CIP 110041 / 391-98 / NVH 391-98)).